The sequence spans 585 residues: DNA ligase (585 aa).

Glutamate 278 contributes to the ATP binding site. Lysine 280 functions as the N6-AMP-lysine intermediate in the catalytic mechanism. ATP contacts are provided by arginine 285, arginine 301, glutamate 330, phenylalanine 370, arginine 444, and lysine 450.

Belongs to the ATP-dependent DNA ligase family. Requires Mg(2+) as cofactor.

It carries out the reaction ATP + (deoxyribonucleotide)n-3'-hydroxyl + 5'-phospho-(deoxyribonucleotide)m = (deoxyribonucleotide)n+m + AMP + diphosphate.. Functionally, DNA ligase that seals nicks in double-stranded DNA during DNA replication, DNA recombination and DNA repair. This Haloferax volcanii (strain ATCC 29605 / DSM 3757 / JCM 8879 / NBRC 14742 / NCIMB 2012 / VKM B-1768 / DS2) (Halobacterium volcanii) protein is DNA ligase.